We begin with the raw amino-acid sequence, 38 residues long: Kappa-theraphotoxin-Hm2a (38 aa).

3 disulfides stabilise this stretch: C2–C16, C9–C21, and C15–C32. F38 bears the Phenylalanine amide mark.

The protein belongs to the neurotoxin 10 (Hwtx-1) family. 13 (Hntx-13) subfamily. In terms of tissue distribution, expressed by the venom gland.

It localises to the secreted. In terms of biological role, inhibitor of voltage-gated potassium channels. It specifically inhibits Kv2.1/KCNB1 channels. The protein is Kappa-theraphotoxin-Hm2a of Heteroscodra maculata (Togo starburst tarantula).